Here is a 185-residue protein sequence, read N- to C-terminus: Peptide deformylase (185 aa).

2 residues coordinate Fe cation: cysteine 98 and histidine 140. Residue glutamate 141 is part of the active site. Histidine 144 contacts Fe cation.

The protein belongs to the polypeptide deformylase family. Fe(2+) is required as a cofactor.

It carries out the reaction N-terminal N-formyl-L-methionyl-[peptide] + H2O = N-terminal L-methionyl-[peptide] + formate. Functionally, removes the formyl group from the N-terminal Met of newly synthesized proteins. Requires at least a dipeptide for an efficient rate of reaction. N-terminal L-methionine is a prerequisite for activity but the enzyme has broad specificity at other positions. This chain is Peptide deformylase, found in Parabacteroides distasonis (strain ATCC 8503 / DSM 20701 / CIP 104284 / JCM 5825 / NCTC 11152).